A 140-amino-acid chain; its full sequence is Large ribosomal subunit protein bL17 (140 aa).

Belongs to the bacterial ribosomal protein bL17 family. Part of the 50S ribosomal subunit. Contacts protein L32.

The chain is Large ribosomal subunit protein bL17 from Ruegeria pomeroyi (strain ATCC 700808 / DSM 15171 / DSS-3) (Silicibacter pomeroyi).